The sequence spans 827 residues: Glycerol-3-phosphate acyltransferase (827 aa).

Residues 325–330 (CHRSHM) carry the HXXXXD motif motif.

It belongs to the GPAT/DAPAT family.

It is found in the cell inner membrane. The catalysed reaction is sn-glycerol 3-phosphate + an acyl-CoA = a 1-acyl-sn-glycero-3-phosphate + CoA. The protein operates within phospholipid metabolism; CDP-diacylglycerol biosynthesis; CDP-diacylglycerol from sn-glycerol 3-phosphate: step 1/3. The chain is Glycerol-3-phosphate acyltransferase from Shigella boydii serotype 4 (strain Sb227).